Here is a 255-residue protein sequence, read N- to C-terminus: NADH dehydrogenase [ubiquinone] flavoprotein 2, mitochondrial (255 aa).

A mitochondrion-targeting transit peptide spans 1–35 (MLARLAAKRLLEIRQVFRQPTSQVTRSLSTALNYH). The [2Fe-2S] cluster site is built by Cys130, Cys135, Cys171, and Cys175. Positions 214-255 (RKGEKPPHGTQNPKRIKCGPEGGNKTLLGEPKPPQFRDLDAC) are disordered.

It belongs to the complex I 24 kDa subunit family. In terms of assembly, complex I is composed of at least 49 different subunits. This is a component of the flavoprotein-sulfur (FP) fragment of the enzyme. The cofactor is [2Fe-2S] cluster.

Its subcellular location is the mitochondrion inner membrane. It catalyses the reaction a ubiquinone + NADH + 5 H(+)(in) = a ubiquinol + NAD(+) + 4 H(+)(out). In terms of biological role, core subunit of the mitochondrial membrane respiratory chain NADH dehydrogenase (Complex I) that is believed to belong to the minimal assembly required for catalysis. Complex I functions in the transfer of electrons from NADH to the respiratory chain. The immediate electron acceptor for the enzyme is believed to be ubiquinone. The protein is NADH dehydrogenase [ubiquinone] flavoprotein 2, mitochondrial of Arabidopsis thaliana (Mouse-ear cress).